The sequence spans 419 residues: Ribosome biogenesis protein WDR12 homolog (419 aa).

A ubiquitin-like (UBL) domain region spans residues 10-91 (VQVHLKTKQE…EDAIEIEYVE (82 aa)). WD repeat units follow at residues 103 to 141 (LHDD…LTIP), 142 to 184 (GHTA…NTVE), 191 to 230 (GHER…AGEG), 249 to 287 (GHRE…IKAE), 289 to 328 (STNK…GSVV), 334 to 374 (GHNA…APLY), and 378 to 416 (GHGE…VENM).

Belongs to the WD repeat WDR12/YTM1 family.

The protein resides in the nucleus. It localises to the nucleolus. It is found in the nucleoplasm. Its function is as follows. Required for maturation of ribosomal RNAs and formation of the large ribosomal subunit. This chain is Ribosome biogenesis protein WDR12 homolog, found in Drosophila persimilis (Fruit fly).